A 283-amino-acid chain; its full sequence is MTDSNNWYIEHFERTGSAIGYRITGKLDEVQSPFQKIEIFQTTDWGNLMTIDGAIMLTSKDNFFYHEMISHPVLFTHAAPKRVVIIGGGDCGTLREVLKHTGVESVTQCDIDEQVTVMARKHFPELCDSNDDARAELLFDDGVAYMANCPAGSVDVVIVDSTDPVGPGEGLFNKAFYESCFKALKDDGILVQQSESPLMQLELINEMRAEMGKAGFGSFKTLPFPQPCYPTGWWSVTMARKGDSSFDFRQADSAAKTFNTLYYTAALHTGVLVTPPFVQAALK.

Residues 5 to 241 form the PABS domain; the sequence is NNWYIEHFER…GWWSVTMARK (237 aa). Gln35 contacts S-methyl-5'-thioadenosine. His66 and Asp90 together coordinate spermidine. S-methyl-5'-thioadenosine is bound by residues Asp110 and 141 to 142; that span reads DG. Catalysis depends on Asp160, which acts as the Proton acceptor. Position 160–163 (160–163) interacts with spermidine; that stretch reads DSTD. Pro167 provides a ligand contact to S-methyl-5'-thioadenosine.

The protein belongs to the spermidine/spermine synthase family. Homodimer or homotetramer.

The protein resides in the cytoplasm. The enzyme catalyses S-adenosyl 3-(methylsulfanyl)propylamine + putrescine = S-methyl-5'-thioadenosine + spermidine + H(+). Its pathway is amine and polyamine biosynthesis; spermidine biosynthesis; spermidine from putrescine: step 1/1. Catalyzes the irreversible transfer of a propylamine group from the amino donor S-adenosylmethioninamine (decarboxy-AdoMet) to putrescine (1,4-diaminobutane) to yield spermidine. This is Polyamine aminopropyltransferase from Stenotrophomonas maltophilia (strain K279a).